Reading from the N-terminus, the 375-residue chain is F-box/kelch-repeat protein At4g39240 (375 aa).

The segment covering 1-15 (MPFSAASSSSVSSIA) has biased composition (low complexity). Residues 1–27 (MPFSAASSSSVSSIAEEPPPKKQHDPS) form a disordered region. One can recognise an F-box domain in the interval 31–77 (SSYLLLLPDEIILNCLARLPKCYYPVISLVSKTFRRLIASPEIYVER). Kelch repeat units follow at residues 140-186 (EIYV…FFDG), 187-232 (KLYV…RSFA), and 275-321 (KIYT…GNLA).

This is F-box/kelch-repeat protein At4g39240 from Arabidopsis thaliana (Mouse-ear cress).